The chain runs to 111 residues: UPF0060 membrane protein HCH_03337 (111 aa).

The next 4 membrane-spanning stretches (helical) occupy residues 8–28 (LLFA…WLVI), 33–53 (SLWL…LLTL), 65–85 (YGGM…GVGL), and 88–108 (FDFL…LQPI).

The protein belongs to the UPF0060 family.

The protein resides in the cell inner membrane. In Hahella chejuensis (strain KCTC 2396), this protein is UPF0060 membrane protein HCH_03337.